A 444-amino-acid chain; its full sequence is Type VI secretion system baseplate component TssK1 (444 aa).

As to quaternary structure, forms transient higher-order structures that correlated with dynamics of sheath component TssB1. Interacts with TssA1.

Its function is as follows. Core component of the H1 type VI (H1-T6SS) secretion system that plays a role in the release of toxins targeting both eukaryotic and prokaryotic species. Functions as a spatio-temporal marker for assembly of contractile apparatus made of TssB1 and TssC1. This role in assembly depends on TssM1. The chain is Type VI secretion system baseplate component TssK1 from Pseudomonas aeruginosa (strain ATCC 15692 / DSM 22644 / CIP 104116 / JCM 14847 / LMG 12228 / 1C / PRS 101 / PAO1).